A 261-amino-acid chain; its full sequence is 14-3-3 protein 8 (261 aa).

A disordered region spans residues 237–261 (DIPEDGEEAPKGDAANKVGAGEDAE).

The protein belongs to the 14-3-3 family. As to quaternary structure, homodimer.

The polypeptide is 14-3-3 protein 8 (TFT8) (Solanum lycopersicum (Tomato)).